Here is an 868-residue protein sequence, read N- to C-terminus: Receptor-like protein kinase At5g59670 (868 aa).

An N-terminal signal peptide occupies residues 1–22 (MESSFGLLLALLTLTIIHIVQA). At 23 to 500 (QDPQGFISLD…PRLIKPPKKE (478 aa)) the chain is on the extracellular side. 12 N-linked (GlcNAc...) asparagine glycosylation sites follow: Asn38, Asn94, Asn141, Asn287, Asn300, Asn372, Asn405, Asn416, Asn423, Asn445, Asn464, and Asn471. 3 LRR repeats span residues 409–432 (PPRI…AIQS), 433–459 (ITQL…KMKS), and 461–481 (SVIN…LRKK). Residues 501 to 521 (FPVAIVTLVVFVTVIVVLFLV) traverse the membrane as a helical segment. Over 522–868 (FRKKMSTIVK…LDTTAVPMAR (347 aa)) the chain is Cytoplasmic. At Thr555 the chain carries Phosphothreonine. The Protein kinase domain occupies 564–834 (KNFQRVLGKG…SMSQVIHELK (271 aa)). ATP-binding positions include 570 to 578 (LGKGGFGMV) and Lys592. Position 637 is a phosphotyrosine (Tyr637). Asp689 (proton acceptor) is an active-site residue. A Phosphoserine modification is found at Ser723. 2 positions are modified to phosphothreonine: Thr724 and Thr729.

The protein belongs to the protein kinase superfamily. Ser/Thr protein kinase family. Autophosphorylated on Tyr and Thr residues.

It localises to the cell membrane. The catalysed reaction is L-seryl-[protein] + ATP = O-phospho-L-seryl-[protein] + ADP + H(+). The enzyme catalyses L-threonyl-[protein] + ATP = O-phospho-L-threonyl-[protein] + ADP + H(+). It catalyses the reaction L-tyrosyl-[protein] + ATP = O-phospho-L-tyrosyl-[protein] + ADP + H(+). Probable receptor with a dual specificity kinase activity acting on both serine/threonine- and tyrosine-containing substrates. This chain is Receptor-like protein kinase At5g59670, found in Arabidopsis thaliana (Mouse-ear cress).